The following is a 757-amino-acid chain: Cap-specific mRNA (nucleoside-2'-O-)-methyltransferase 1 (757 aa).

Positions 1 to 61 (MFQSNQYDEY…EDDEEEEDTP (61 aa)) are disordered. 2 stretches are compositionally biased toward acidic residues: residues 18–32 (EENESNENENENENE) and 40–59 (GDQDSEDSFIYEEDDEEEED). The 47-residue stretch at 62 to 108 (KLSFGAKFLAKHGHIEGQGLGKEKDGRIDLIEVDRFQSTKGLGFAEN) folds into the G-patch domain. In terms of domain architecture, RrmJ-type SAM-dependent 2'-O-MTase spans 214–438 (IFINRAAVKM…ERYIICKNFL (225 aa)). Residues G257, E301, and D352 each contribute to the S-adenosyl-L-methionine site. The active-site Proton acceptor is the K392. Residues 538-548 (HKNRQKHHHNN) show a composition bias toward basic residues. The segment at 538-670 (HKNRQKHHHN…NNNNNNNNKN (133 aa)) is disordered. A compositionally biased stretch (low complexity) spans 549–569 (HSNNNNNNNNSNNNNNNNNQH). Residues 570-581 (QHQHHQHQHHQN) show a composition bias toward basic residues. Residues 597–668 (NNNINNNSNN…NNNNNNNNNN (72 aa)) show a composition bias toward low complexity.

It carries out the reaction a 5'-end (N(7)-methyl 5'-triphosphoguanosine)-ribonucleoside in mRNA + S-adenosyl-L-methionine = a 5'-end (N(7)-methyl 5'-triphosphoguanosine)-(2'-O-methyl-ribonucleoside) in mRNA + S-adenosyl-L-homocysteine + H(+). In terms of biological role, S-adenosyl-L-methionine-dependent methyltransferase that mediates mRNA cap1 2'-O-ribose methylation to the 5'-cap structure of mRNAs. Methylates the ribose of the first nucleotide of a m(7)GpppG-capped mRNA to produce m(7)GpppNmp (cap1). Cap1 modification is linked to higher levels of translation. This is Cap-specific mRNA (nucleoside-2'-O-)-methyltransferase 1 from Dictyostelium discoideum (Social amoeba).